The sequence spans 40 residues: Proteinase inhibitor IIB (40 aa).

3 disulfide bridges follow: C2–C16, C6–C28, and C12–C38.

The protein belongs to the protease inhibitor I20 (potato type II proteinase inhibitor) family.

It localises to the secreted. In terms of biological role, inhibits chymotrypsin and subtilisin strongly. This is Proteinase inhibitor IIB from Solanum tuberosum (Potato).